Here is a 720-residue protein sequence, read N- to C-terminus: Receptor-like protein CLAVATA2 (720 aa).

The signal sequence occupies residues 1 to 25 (MIKIADFTLFFFIFVFSPSLPLAQS). Residues 26-92 (QLPDLDPQDK…LNLSSQIHPS (67 aa)) form an N-cap region. At 26–686 (QLPDLDPQDK…QNELVEGPIS (661 aa)) the chain is on the extracellular side. N-linked (GlcNAc...) asparagine glycosylation is found at N49, N62, N84, N108, N127, and N168. Cysteines 60 and 68 form a disulfide. LRR repeat units lie at residues 96–122 (LSSLQSLDLSHNNFSGNIPSCFGSLRN), 124–144 (RTLNLSRNRFVGSIPATFVSL), 146–168 (ELREVVLSENRDLGGVVPHWFGN), 170–194 (SMNLERVDFSFCSFVGELPESLLYL), 195–217 (KSLKYLNLESNNMTGTLRDFQQP), 219–238 (VVLNLASNQFSGTLPCFYAS), 239–263 (RPSLSILNIAENSLVGGLPSCLGSL), 264–287 (KELSHLNLSFNGFNYEISPRLMFS), 288–311 (EKLVMLDLSHNGFSGRLPSRISET), 314–338 (KLGLVLLDLSHNSFSGDIPLRITEL), 339–362 (KSLQALRLSHNLLTGDIPARIGNL), 364–386 (YLQVIDLSHNALTGSIPLNIVGC), 388–410 (QLLALMISNNNLSGEIQPELDAL), 411–436 (DSLKILDISNNHISGEIPLTLAGLKS), 438–458 (EIVDISSNNLSGNLNEAITKW), 459–482 (SNLKYLSLARNKFSGTLPSWLFKF), 484–506 (KIQMIDYSSNRFSWFIPDDNLNS), 547–571 (LLSMVGIDLSDNLLHGEIPEALFRQ), 573–594 (NIEYLNLSYNFLEGQLPRLEKL), 595–617 (PRLKALDLSHNSLSGQVIGNISA), and 619–641 (PGLTLLNLSHNCFSGIITEKEGL). N-linked (GlcNAc...) asparagine glycosylation is present at N206. N-linked (GlcNAc...) asparagine glycosylation is present at N270. N361 carries N-linked (GlcNAc...) asparagine glycosylation. N398 carries an N-linked (GlcNAc...) asparagine glycan. Residue N446 is glycosylated (N-linked (GlcNAc...) asparagine). N-linked (GlcNAc...) asparagine glycosylation occurs at N505. N-linked (GlcNAc...) asparagine glycans are attached at residues N578, N614, and N625. The interval 649 to 682 (AGNPELCVETPGSKCDPANIDASQEEIYQNELVE) is C-cap/acidic domain. A helical membrane pass occupies residues 687–707 (IWIFCLSAFISFDFGVLGIFC). The Cytoplasmic segment spans residues 708-720 (SARARSYILQTKA).

This sequence belongs to the RLP family. In terms of assembly, parts of a tetrameric complex made of two CLV2/CRN heterodimers that can interact with CLV3 and CLE peptides. CLV2/CRN heterodimer interacts with CLV1 homodimers. Interacts with CRN; this dimer can interact with BAM3. Interacts with CLE14. In terms of tissue distribution, mostly expressed in apices (e.g. shoot apical meristem and flower buds), and, to a lower extent, in flowers, leaves, seedlings and siliques. Also expressed in the inner tissues of the proximal root meristem. Expressed throughout the vascular cylinder of root tips.

It is found in the cell membrane. The protein localises to the endoplasmic reticulum membrane. In terms of biological role, involved in the perception of CLV3 and CLV3-like (CLE) peptides, that act as extracellular signals regulating meristems maintenance. Required for the sensing of the root CLE peptides (e.g. CLE8, CLE9/CLE10, CLE11, CLE13, CLE14, CLE16, CLE17, CLE18, CLE20, CLE21, CLE25, CLE26, CLE40, CLE41/CLE44 and CLE45), which also involves CRN and leads to root growth regulation, mostly in the phloem and protophloem. Involved in controlling the stem cell population size in shoot and root apical meristems, and during organ development. Promotes the formation of CLV1 multimers. In complex with CRN, perceives secreted CLV3-like effector proteins from plant-parasitic cyst nematodes as ligand mimics of the plant CLE signaling pathway. This recognition is required for proper feeding structure (syncytium) development and ultimately successful nematode infection. CLE14 perception by CLV2/CRN complex triggers root meristem differentiation. This Arabidopsis thaliana (Mouse-ear cress) protein is Receptor-like protein CLAVATA2.